Consider the following 123-residue polypeptide: Large ribosomal subunit protein bL12 (123 aa).

Residues Lys-98–Lys-123 are disordered. Positions Gly-100–Asp-115 are enriched in basic and acidic residues.

This sequence belongs to the bacterial ribosomal protein bL12 family. As to quaternary structure, homodimer. Part of the ribosomal stalk of the 50S ribosomal subunit. Forms a multimeric L10(L12)X complex, where L10 forms an elongated spine to which 2 to 4 L12 dimers bind in a sequential fashion. Binds GTP-bound translation factors.

Functionally, forms part of the ribosomal stalk which helps the ribosome interact with GTP-bound translation factors. Is thus essential for accurate translation. In Halothermothrix orenii (strain H 168 / OCM 544 / DSM 9562), this protein is Large ribosomal subunit protein bL12.